Reading from the N-terminus, the 189-residue chain is Imidazoleglycerol-phosphate dehydratase (189 aa).

Belongs to the imidazoleglycerol-phosphate dehydratase family.

The protein localises to the cytoplasm. The catalysed reaction is D-erythro-1-(imidazol-4-yl)glycerol 3-phosphate = 3-(imidazol-4-yl)-2-oxopropyl phosphate + H2O. It functions in the pathway amino-acid biosynthesis; L-histidine biosynthesis; L-histidine from 5-phospho-alpha-D-ribose 1-diphosphate: step 6/9. The protein is Imidazoleglycerol-phosphate dehydratase of Nautilia profundicola (strain ATCC BAA-1463 / DSM 18972 / AmH).